The primary structure comprises 241 residues: Ribonuclease P protein component 3 (241 aa).

The protein belongs to the eukaryotic/archaeal RNase P protein component 3 family. Consists of a catalytic RNA component and at least 4-5 protein subunits.

It localises to the cytoplasm. It catalyses the reaction Endonucleolytic cleavage of RNA, removing 5'-extranucleotides from tRNA precursor.. In terms of biological role, part of ribonuclease P, a protein complex that generates mature tRNA molecules by cleaving their 5'-ends. The sequence is that of Ribonuclease P protein component 3 from Methanococcoides burtonii (strain DSM 6242 / NBRC 107633 / OCM 468 / ACE-M).